We begin with the raw amino-acid sequence, 109 residues long: Stress-response A/B barrel domain-containing protein HS1 (109 aa).

One can recognise a Stress-response A/B barrel domain in the interval 8–102 (VKHVLLASFK…SLDKVLVIDY (95 aa)). Mg(2+) contacts are provided by Val36, Ile39, Glu40, and Met42.

In terms of assembly, homodimer. Requires Mg(2+) as cofactor.

Functionally, heat stable protein involved in defense against fungal pathogens. Possesses antifungal activity against diverse pathogenic fungi. Possesses antimicrobial activity. Possesses ribonuclease activity. The chain is Stress-response A/B barrel domain-containing protein HS1 from Arabidopsis thaliana (Mouse-ear cress).